Consider the following 422-residue polypeptide: 26S proteasome non-ATPase regulatory subunit 11 (422 aa).

Residue Ala-2 is modified to N-acetylalanine. A phosphoserine mark is found at Ser-14 and Ser-23. Residues 224-392 (DWKTAYSYFY…GVLIIFDEPP (169 aa)) form the PCI domain. A Glycyl lysine isopeptide (Lys-Gly) (interchain with G-Cter in SUMO2) cross-link involves residue Lys-274.

The protein belongs to the proteasome subunit S9 family. As to quaternary structure, component of the 19S proteasome regulatory particle complex. The 26S proteasome consists of a 20S core particle (CP) and two 19S regulatory subunits (RP). The regulatory particle is made of a lid composed of 9 subunits including PSMD11, a base containing 6 ATPases and few additional components.

Functionally, component of the 26S proteasome, a multiprotein complex involved in the ATP-dependent degradation of ubiquitinated proteins. This complex plays a key role in the maintenance of protein homeostasis by removing misfolded or damaged proteins, which could impair cellular functions, and by removing proteins whose functions are no longer required. Therefore, the proteasome participates in numerous cellular processes, including cell cycle progression, apoptosis, or DNA damage repair. In the complex, PSMD11 is required for proteasome assembly. Plays a key role in increased proteasome activity in embryonic stem cells (ESCs): its high expression in ESCs promotes enhanced assembly of the 26S proteasome, followed by higher proteasome activity. This is 26S proteasome non-ATPase regulatory subunit 11 (Psmd11) from Mus musculus (Mouse).